A 258-amino-acid chain; its full sequence is Phosphate import ATP-binding protein PstB (258 aa).

Positions 5–247 (IDVSGLTAYY…ERIFSNPSVQ (243 aa)) constitute an ABC transporter domain. Position 37–44 (37–44 (GPSGCGKS)) interacts with ATP.

Belongs to the ABC transporter superfamily. Phosphate importer (TC 3.A.1.7) family. In terms of assembly, the complex is composed of two ATP-binding proteins (PstB), two transmembrane proteins (PstC and PstA) and a solute-binding protein (PstS).

The protein resides in the cell membrane. The catalysed reaction is phosphate(out) + ATP + H2O = ADP + 2 phosphate(in) + H(+). In terms of biological role, part of the ABC transporter complex PstSACB involved in phosphate import. Responsible for energy coupling to the transport system. The chain is Phosphate import ATP-binding protein PstB from Streptomyces avermitilis (strain ATCC 31267 / DSM 46492 / JCM 5070 / NBRC 14893 / NCIMB 12804 / NRRL 8165 / MA-4680).